A 201-amino-acid chain; its full sequence is Small ribosomal subunit protein uS4 (201 aa).

Residues 91–157 enclose the S4 RNA-binding domain; sequence SRLDNVIYRA…VPFQIARETA (67 aa).

Belongs to the universal ribosomal protein uS4 family. Part of the 30S ribosomal subunit. Contacts protein S5. The interaction surface between S4 and S5 is involved in control of translational fidelity.

In terms of biological role, one of the primary rRNA binding proteins, it binds directly to 16S rRNA where it nucleates assembly of the body of the 30S subunit. Functionally, with S5 and S12 plays an important role in translational accuracy. This chain is Small ribosomal subunit protein uS4, found in Mycobacterium tuberculosis (strain ATCC 25177 / H37Ra).